The chain runs to 588 residues: Aspartate--tRNA ligase (588 aa).

An L-aspartate-binding site is contributed by E177. The segment at 201–204 (QLFK) is aspartate. R223 provides a ligand contact to L-aspartate. ATP is bound by residues 223-225 (RDE) and Q232. H451 is a binding site for L-aspartate. E485 is an ATP binding site. R492 contributes to the L-aspartate binding site. 537 to 540 (GLDR) contacts ATP.

It belongs to the class-II aminoacyl-tRNA synthetase family. Type 1 subfamily. Homodimer.

It localises to the cytoplasm. It catalyses the reaction tRNA(Asp) + L-aspartate + ATP = L-aspartyl-tRNA(Asp) + AMP + diphosphate. Its function is as follows. Catalyzes the attachment of L-aspartate to tRNA(Asp) in a two-step reaction: L-aspartate is first activated by ATP to form Asp-AMP and then transferred to the acceptor end of tRNA(Asp). The chain is Aspartate--tRNA ligase from Staphylococcus aureus (strain Newman).